Here is a 240-residue protein sequence, read N- to C-terminus: Protein unc-119 homolog A (240 aa).

Residues 1 to 12 (MKVKKGGGGAGT) show a composition bias toward gly residues. The disordered stretch occupies residues 1-61 (MKVKKGGGGA…GPLQRKQRIG (61 aa)). Residues 13 to 23 (GAEPASGAPGP) show a composition bias toward low complexity. Phosphoserine; by CK2 occurs at positions 37, 39, and 41. Tyrosine 131 contacts tetradecanoate.

Belongs to the PDE6D/unc-119 family. In terms of assembly, interacts with CABP4; in the absence of calcium. May interact with GTP-bound ARL1. Interacts with ARL2 and ARL3 (GTP-bound forms); this promotes the release of myristoylated cargo proteins. Found in a complex with ARL3, RP2 and UNC119; RP2 induces hydrolysis of GTP ARL3 in the complex, leading to the release of UNC119. Interacts with NPHP3 (when myristoylated). Interacts with CYS1 (when myristoylated). Interacts with MACIR; interaction only takes place when UNC119 is not liganded with myristoylated proteins. Interacts with LCK; this interaction plays a crucial role in activation of LCK. Interacts with FYN. Interacts with RAB11A; in a cell cycle-dependent manner. Interacts with LYN (via SH2 and SH3 domains); leading to LYN activation. Interacts with DNM1; leading to a decrease of DNM1 GTPase activity. Found in a complex with ABL1, ABL2, CRK and UNC119; leading to the inhibition of CRK phosphorylation by ABL kinases. Interacts with CD44. Interacts with KLHL18 (via kelch repeats). Interacts with PPP3CA, PPP3CB and PPP3CC. Interacts with USP48; this interaction promotes UNC119 stability. In terms of processing, phosphorylation suppresses its interaction with KLHL18 and down-regulates its KLHL18-mediated degradation. Phosphorylated more under light conditions than dark conditions. Dephosphorylated by calcineurin.

The protein localises to the cytoplasm. It localises to the cytoskeleton. It is found in the microtubule organizing center. Its subcellular location is the centrosome. The protein resides in the spindle. The protein localises to the spindle pole. Involved in synaptic functions in photoreceptor cells, the signal transduction in immune cells as a Src family kinase activator, endosome recycling, the uptake of bacteria and endocytosis, protein trafficking in sensory neurons and as lipid-binding chaperone with specificity for a diverse subset of myristoylated proteins. Specifically binds the myristoyl moiety of a subset of N-terminally myristoylated proteins and is required for their localization. Binds myristoylated GNAT1 and is required for G-protein localization and trafficking in sensory neurons. Probably plays a role in trafficking proteins in photoreceptor cells. Plays important roles in mediating Src family kinase signals for the completion of cytokinesis via RAB11A. This is Protein unc-119 homolog A (UNC119) from Canis lupus familiaris (Dog).